The primary structure comprises 204 residues: LexA repressor (204 aa).

Residues 27 to 47 (VREIGEAVGLASSSTVHGHLA) constitute a DNA-binding region (H-T-H motif). Catalysis depends on for autocatalytic cleavage activity residues Ser-126 and Lys-164.

It belongs to the peptidase S24 family. In terms of assembly, homodimer.

The catalysed reaction is Hydrolysis of Ala-|-Gly bond in repressor LexA.. In terms of biological role, represses a number of genes involved in the response to DNA damage (SOS response), including recA and lexA. In the presence of single-stranded DNA, RecA interacts with LexA causing an autocatalytic cleavage which disrupts the DNA-binding part of LexA, leading to derepression of the SOS regulon and eventually DNA repair. The chain is LexA repressor from Listeria monocytogenes serotype 4b (strain CLIP80459).